Reading from the N-terminus, the 440-residue chain is ATP-dependent protease ATPase subunit HslU (440 aa).

ATP is bound by residues valine 18, 60 to 65, aspartate 254, glutamate 319, and arginine 391; that span reads GVGKTE.

The protein belongs to the ClpX chaperone family. HslU subfamily. In terms of assembly, a double ring-shaped homohexamer of HslV is capped on each side by a ring-shaped HslU homohexamer. The assembly of the HslU/HslV complex is dependent on binding of ATP.

It is found in the cytoplasm. Functionally, ATPase subunit of a proteasome-like degradation complex; this subunit has chaperone activity. The binding of ATP and its subsequent hydrolysis by HslU are essential for unfolding of protein substrates subsequently hydrolyzed by HslV. HslU recognizes the N-terminal part of its protein substrates and unfolds these before they are guided to HslV for hydrolysis. In Cellvibrio japonicus (strain Ueda107) (Pseudomonas fluorescens subsp. cellulosa), this protein is ATP-dependent protease ATPase subunit HslU.